The chain runs to 598 residues: Pentatricopeptide repeat-containing protein At5g14820, mitochondrial (598 aa).

The N-terminal 98 residues, 1–98, are a transit peptide targeting the mitochondrion; it reads MAAAPWLYLS…RGFSSGSSNV (98 aa). PPR repeat units follow at residues 193-227, 229-261, 262-292, 296-330, 331-365, 366-400, 401-435, 436-470, 471-505, and 506-540; these read DSRTYNSMMSILAKTRQFETMVSVLEEMGTKGLLT, ETFTIAMKAFAAAKERKKAVGIFELMKKYKFKI, GVETINCLLDSLGRAKLGKEAQVLFDKLKER, NMMTYTVLLNGWCRVRNLIEAARIWNDMIDHGLKP, DIVAHNVMLEGLLRSMKKSDAIKLFHVMKSKGPCP, NVRSYTIMIRDFCKQSSMETAIEYFDDMVDSGLQP, DAAVYTCLITGFGTQKKLDTVYELLKEMQEKGHPP, DGKTYNALIKLMANQKMPEHGTRIYNKMIQNEIEP, SIHTFNMIMKSYFVARNYEMGRAVWDEMIKKGICP, and DDNSYTVLIRGLISEGKSREACRYLEEMLDKGMKT.

It belongs to the PPR family. P subfamily.

It localises to the mitochondrion. The polypeptide is Pentatricopeptide repeat-containing protein At5g14820, mitochondrial (Arabidopsis thaliana (Mouse-ear cress)).